Reading from the N-terminus, the 69-residue chain is uncharacterized protein (69 aa).

This is an uncharacterized protein from Bacillus anthracis.